The following is a 336-amino-acid chain: Serpentine receptor class gamma-9 (336 aa).

7 consecutive transmembrane segments (helical) span residues Leu30–Ile50, Phe64–Ile84, Ile111–Thr131, Leu152–Ile172, Phe200–Phe220, Leu237–Leu257, and Phe271–Phe291.

The protein belongs to the nematode receptor-like protein srg family.

The protein resides in the membrane. The polypeptide is Serpentine receptor class gamma-9 (srg-9) (Caenorhabditis elegans).